The sequence spans 54 residues: Large ribosomal subunit protein eL37 (54 aa).

Zn(2+)-binding residues include Cys-20, Cys-23, Cys-35, and Cys-38. Residues 20-38 (CRRCGHHTYNVRTKRCSHC) form a C4-type zinc finger.

Belongs to the eukaryotic ribosomal protein eL37 family. It depends on Zn(2+) as a cofactor.

Its function is as follows. Binds to the 23S rRNA. The protein is Large ribosomal subunit protein eL37 (rpl37e) of Thermoplasma volcanium (strain ATCC 51530 / DSM 4299 / JCM 9571 / NBRC 15438 / GSS1).